The following is a 492-amino-acid chain: uncharacterized protein (492 aa).

The protein belongs to the FGGY kinase family.

This is an uncharacterized protein from Archaeoglobus fulgidus (strain ATCC 49558 / DSM 4304 / JCM 9628 / NBRC 100126 / VC-16).